A 421-amino-acid polypeptide reads, in one-letter code: Imidazolonepropionase (421 aa).

Fe(3+) contacts are provided by H81 and H83. Residues H81 and H83 each contribute to the Zn(2+) site. 4-imidazolone-5-propanoate contacts are provided by R90, Y153, and H186. Y153 is a binding site for N-formimidoyl-L-glutamate. Fe(3+) is bound at residue H251. H251 provides a ligand contact to Zn(2+). Residue E254 coordinates 4-imidazolone-5-propanoate. D326 is a binding site for Fe(3+). D326 is a binding site for Zn(2+). Residues N328 and G330 each contribute to the N-formimidoyl-L-glutamate site. 4-imidazolone-5-propanoate is bound at residue S331.

Belongs to the metallo-dependent hydrolases superfamily. HutI family. Zn(2+) serves as cofactor. Requires Fe(3+) as cofactor.

It localises to the cytoplasm. It carries out the reaction 4-imidazolone-5-propanoate + H2O = N-formimidoyl-L-glutamate. It functions in the pathway amino-acid degradation; L-histidine degradation into L-glutamate; N-formimidoyl-L-glutamate from L-histidine: step 3/3. Catalyzes the hydrolytic cleavage of the carbon-nitrogen bond in imidazolone-5-propanoate to yield N-formimidoyl-L-glutamate. It is the third step in the universal histidine degradation pathway. The chain is Imidazolonepropionase from Streptococcus pyogenes serotype M4 (strain MGAS10750).